The primary structure comprises 175 residues: Translation initiation factor IF-3 (175 aa).

This sequence belongs to the IF-3 family. As to quaternary structure, monomer.

It localises to the cytoplasm. IF-3 binds to the 30S ribosomal subunit and shifts the equilibrium between 70S ribosomes and their 50S and 30S subunits in favor of the free subunits, thus enhancing the availability of 30S subunits on which protein synthesis initiation begins. The chain is Translation initiation factor IF-3 from Blochmanniella floridana.